The chain runs to 250 residues: Cell division protein ZapD (250 aa).

This sequence belongs to the ZapD family. In terms of assembly, interacts with FtsZ.

It is found in the cytoplasm. In terms of biological role, cell division factor that enhances FtsZ-ring assembly. Directly interacts with FtsZ and promotes bundling of FtsZ protofilaments, with a reduction in FtsZ GTPase activity. The chain is Cell division protein ZapD from Bordetella petrii (strain ATCC BAA-461 / DSM 12804 / CCUG 43448).